The primary structure comprises 445 residues: MAFSARFPLWLLLGVVLLASVSASFAHSGHSGGEAEDESEESRAQNNPYLFRSNKFLTLFKNQHGSLRLLQRFNEDTEKLENLRDYRVLEYCSKPNTLLLPHHSDSDLLVLVLEGQAILVLVNPDGRDTYKLDQGDAIKIQAGTPFYLINPDNNQNLRILNFAITFRRPGTVEDFFLSSTKRLPSYLSAFSKNFLEASYDSPYDEIEQTLLQEEQEGVIVKMPKDQIQEISKHAQSSSRKTLSSQDKPFNLRSRDPIYSNNYGKLYEITPEKNSQLRDLDILLNCLQMNEGALFVPHYNSRATVILVANEGRAEVELVGLEQQQQQGLESMQLRRYAATLSEGDILVIPSSFPVALKAASDLNMVGIGVNAENNERNFLAGNKENVIRQIPRQVSDLTFPGSGEEVEELLENQKESYFVDGQPRHIDAGGKARRAHLPNLFRTFY.

An N-terminal signal peptide occupies residues 1–26; that stretch reads MAFSARFPLWLLLGVVLLASVSASFA. Cupin type-1 domains follow at residues 49-207 and 249-407; these read YLFR…DEIE and FNLR…EEVE.

This sequence belongs to the 7S seed storage protein family. As to quaternary structure, homotrimer.

Its function is as follows. Seed storage protein. This is Canavalin from Canavalia gladiata (Sword bean).